Consider the following 373-residue polypeptide: 3 beta-hydroxysteroid dehydrogenase/Delta 5--&gt;4-isomerase type 1 (373 aa).

NADP(+) is bound by residues 10–15 (GAGGFV), Y155, and K159. The Proton donor role is filled by K159. A helical membrane pass occupies residues 288-308 (LPLLYWLAFLLETVSFLLRPF).

This sequence belongs to the 3-beta-HSD family. As to expression, adrenal glands, kidney, testes and ovaries.

It localises to the endoplasmic reticulum membrane. The protein localises to the mitochondrion membrane. The catalysed reaction is a 3beta-hydroxy-Delta(5)-steroid + NAD(+) = a 3-oxo-Delta(5)-steroid + NADH + H(+). The enzyme catalyses pregnenolone + NAD(+) = pregn-5-ene-3,20-dione + NADH + H(+). It catalyses the reaction 3beta-hydroxyandrost-5-en-17-one + NAD(+) = androst-5-ene-3,17-dione + NADH + H(+). It carries out the reaction androst-5-en-3beta,17beta-diol + NAD(+) = 17beta-hydroxy-androst-5-en-3-one + NADH + H(+). The catalysed reaction is a 3beta-hydroxysteroid + NADP(+) = a 3-oxosteroid + NADPH + H(+). The enzyme catalyses 5alpha-androstane-3beta,17beta-diol + NADP(+) = 17beta-hydroxy-5alpha-androstan-3-one + NADPH + H(+). It catalyses the reaction 3beta-hydroxy-5alpha-androstan-17-one + NADP(+) = 5alpha-androstan-3,17-dione + NADPH + H(+). It carries out the reaction a 3-oxo-Delta(5)-steroid = a 3-oxo-Delta(4)-steroid. The catalysed reaction is pregn-5-ene-3,20-dione = progesterone. The enzyme catalyses androst-5-ene-3,17-dione = androst-4-ene-3,17-dione. It catalyses the reaction 17beta-hydroxy-androst-5-en-3-one = testosterone. It carries out the reaction 5alpha-androstane-3beta,17beta-diol + NAD(+) = 17beta-hydroxy-5alpha-androstan-3-one + NADH + H(+). Its pathway is steroid hormone biosynthesis. It participates in steroid metabolism. A bifunctional enzyme responsible for the oxidation and isomerization of 3beta-hydroxy-Delta(5)-steroid precursors to 3-oxo-Delta(4)-steroids, an essential step in steroid hormone biosynthesis. Specifically catalyzes the conversion of pregnenolone to progesterone, dehydroepiandrosterone (DHEA) to 4-androstenedione, and androstenediol to testosterone. Additionally, catalyzes the interconversion between 3beta-hydroxy and 3-oxo-5alpha-androstane steroids controlling the bioavalability of the active forms. Specifically converts dihydrotestosterone to its inactive form 5alpha-androstanediol, that does not bind androgen receptor/AR. Also converts androstanedione, a precursor of testosterone and estrone, to epiandrosterone. Expected to use NAD(+) as preferred electron donor for the 3beta-hydroxy-steroid dehydrogenase activity and NADPH for the 3-ketosteroid reductase activity. This is 3 beta-hydroxysteroid dehydrogenase/Delta 5--&gt;4-isomerase type 1 from Rattus norvegicus (Rat).